The following is a 136-amino-acid chain: Ribonuclease P protein component (136 aa).

The disordered stretch occupies residues 116 to 136; the sequence is RPQRAAAKGSAGTTQKGTPRA. Residues 126 to 136 show a composition bias toward polar residues; that stretch reads AGTTQKGTPRA.

The protein belongs to the RnpA family. In terms of assembly, consists of a catalytic RNA component (M1 or rnpB) and a protein subunit.

The catalysed reaction is Endonucleolytic cleavage of RNA, removing 5'-extranucleotides from tRNA precursor.. Its function is as follows. RNaseP catalyzes the removal of the 5'-leader sequence from pre-tRNA to produce the mature 5'-terminus. It can also cleave other RNA substrates such as 4.5S RNA. The protein component plays an auxiliary but essential role in vivo by binding to the 5'-leader sequence and broadening the substrate specificity of the ribozyme. The chain is Ribonuclease P protein component from Pseudarthrobacter chlorophenolicus (strain ATCC 700700 / DSM 12829 / CIP 107037 / JCM 12360 / KCTC 9906 / NCIMB 13794 / A6) (Arthrobacter chlorophenolicus).